Reading from the N-terminus, the 257-residue chain is Exosome complex component Rrp4 (257 aa).

The S1 motif domain occupies 65 to 137; that stretch reads GDNVLGKIVD…EVNQIDLTTK (73 aa). The 60-residue stretch at 147–206 folds into the KH domain; that stretch reads RGGQLVTITPSKVPRLIGKGGSMINMIKTLTGTRIIVGQNGWVWVSGKNDELERLAIEAI.

This sequence belongs to the RRP4 family. Component of the archaeal exosome complex. Forms a trimer of Rrp4 and/or Csl4 subunits. The trimer associates with a hexameric ring-like arrangement composed of 3 Rrp41-Rrp42 heterodimers.

It is found in the cytoplasm. Functionally, non-catalytic component of the exosome, which is a complex involved in RNA degradation. Increases the RNA binding and the efficiency of RNA degradation. Confers strong poly(A) specificity to the exosome. The polypeptide is Exosome complex component Rrp4 (Thermococcus kodakarensis (strain ATCC BAA-918 / JCM 12380 / KOD1) (Pyrococcus kodakaraensis (strain KOD1))).